Consider the following 145-residue polypeptide: D-aminoacyl-tRNA deacylase (145 aa).

The Gly-cisPro motif, important for rejection of L-amino acids motif lies at 137–138 (GP).

Belongs to the DTD family. Homodimer.

The protein localises to the cytoplasm. The enzyme catalyses glycyl-tRNA(Ala) + H2O = tRNA(Ala) + glycine + H(+). It catalyses the reaction a D-aminoacyl-tRNA + H2O = a tRNA + a D-alpha-amino acid + H(+). Functionally, an aminoacyl-tRNA editing enzyme that deacylates mischarged D-aminoacyl-tRNAs. Also deacylates mischarged glycyl-tRNA(Ala), protecting cells against glycine mischarging by AlaRS. Acts via tRNA-based rather than protein-based catalysis; rejects L-amino acids rather than detecting D-amino acids in the active site. By recycling D-aminoacyl-tRNA to D-amino acids and free tRNA molecules, this enzyme counteracts the toxicity associated with the formation of D-aminoacyl-tRNA entities in vivo and helps enforce protein L-homochirality. The chain is D-aminoacyl-tRNA deacylase from Shewanella amazonensis (strain ATCC BAA-1098 / SB2B).